A 340-amino-acid polypeptide reads, in one-letter code: Hyaluronan and proteoglycan link protein 2 (340 aa).

The first 26 residues, 1 to 26 (MPGWLTLPTLCRFLLWAFTIFHKAQG), serve as a signal peptide directing secretion. Positions 34-144 (PHYLLPPIHE…EDESVALTLS (111 aa)) constitute an Ig-like V-type domain. Cystine bridges form between Cys57–Cys128, Cys170–Cys240, Cys194–Cys215, Cys265–Cys336, and Cys290–Cys311. 2 consecutive Link domains span residues 148-242 (VVFP…FCFT) and 245-338 (LAGQ…YCYA).

The protein belongs to the HAPLN family. In terms of tissue distribution, expressed only in adult brain.

The protein localises to the secreted. It is found in the extracellular space. It localises to the extracellular matrix. Functionally, mediates a firm binding of versican V2 to hyaluronic acid. May play a pivotal role in the formation of the hyaluronan-associated matrix in the central nervous system (CNS) which facilitates neuronal conduction and general structural stabilization. Binds to hyaluronic acid. This Homo sapiens (Human) protein is Hyaluronan and proteoglycan link protein 2 (HAPLN2).